Here is a 363-residue protein sequence, read N- to C-terminus: Phosphoserine aminotransferase (363 aa).

Arg42 is an L-glutamate binding site. Trp105, Thr155, Asp175, and Gln198 together coordinate pyridoxal 5'-phosphate. Lys199 bears the N6-(pyridoxal phosphate)lysine mark. 240–241 (NT) is a pyridoxal 5'-phosphate binding site.

It belongs to the class-V pyridoxal-phosphate-dependent aminotransferase family. SerC subfamily. In terms of assembly, homodimer. It depends on pyridoxal 5'-phosphate as a cofactor.

It is found in the cytoplasm. The catalysed reaction is O-phospho-L-serine + 2-oxoglutarate = 3-phosphooxypyruvate + L-glutamate. The enzyme catalyses 4-(phosphooxy)-L-threonine + 2-oxoglutarate = (R)-3-hydroxy-2-oxo-4-phosphooxybutanoate + L-glutamate. Its pathway is amino-acid biosynthesis; L-serine biosynthesis; L-serine from 3-phospho-D-glycerate: step 2/3. The protein operates within cofactor biosynthesis; pyridoxine 5'-phosphate biosynthesis; pyridoxine 5'-phosphate from D-erythrose 4-phosphate: step 3/5. Functionally, catalyzes the reversible conversion of 3-phosphohydroxypyruvate to phosphoserine and of 3-hydroxy-2-oxo-4-phosphonooxybutanoate to phosphohydroxythreonine. This is Phosphoserine aminotransferase from Herminiimonas arsenicoxydans.